A 259-amino-acid chain; its full sequence is Deoxyribose-phosphate aldolase (259 aa).

The Proton donor/acceptor role is filled by aspartate 102. Lysine 167 acts as the Schiff-base intermediate with acetaldehyde in catalysis. Lysine 201 serves as the catalytic Proton donor/acceptor.

Belongs to the DeoC/FbaB aldolase family. DeoC type 2 subfamily.

It localises to the cytoplasm. It catalyses the reaction 2-deoxy-D-ribose 5-phosphate = D-glyceraldehyde 3-phosphate + acetaldehyde. Its pathway is carbohydrate degradation; 2-deoxy-D-ribose 1-phosphate degradation; D-glyceraldehyde 3-phosphate and acetaldehyde from 2-deoxy-alpha-D-ribose 1-phosphate: step 2/2. Catalyzes a reversible aldol reaction between acetaldehyde and D-glyceraldehyde 3-phosphate to generate 2-deoxy-D-ribose 5-phosphate. The chain is Deoxyribose-phosphate aldolase from Salmonella typhi.